We begin with the raw amino-acid sequence, 74 residues long: Conotoxin Im6.10 (74 aa).

Residues 1–19 (MKTGMIICLLLIAFMDADG) form the signal peptide. The propeptide occupies 20-47 (SPGDTLYSQKTADTDSGMKRFQKTFQKR). 3 disulfides stabilise this stretch: Cys49–Cys58, Cys52–Cys63, and Cys57–Cys73.

As to expression, expressed by the venom duct.

It localises to the secreted. In terms of biological role, probable neurotoxin. The polypeptide is Conotoxin Im6.10 (Conus imperialis (Imperial cone)).